The chain runs to 547 residues: Rho GTPase-activating protein 36 (547 aa).

The signal sequence occupies residues 1 to 40; the sequence is MGGCNPFLKAARTLCPRIMPPLLFLSAFIFLVNVLGGAPG. The Rho-GAP domain occupies 226–426; the sequence is MSLNPIAKQI…AMIDNWDILF (201 aa). Residues 493–547 form a disordered region; sequence FDEGSSEEPAVPPGTAHSHDDEEGAGNPPIPEQDRPLLRVPREKQAKTGIGYFFP. Residues 524–538 show a composition bias toward basic and acidic residues; sequence EQDRPLLRVPREKQA.

Its function is as follows. GTPase activator for the Rho-type GTPases by converting them to an inactive GDP-bound state. The protein is Rho GTPase-activating protein 36 (ARHGAP36) of Ailuropoda melanoleuca (Giant panda).